Reading from the N-terminus, the 336-residue chain is Serpentine receptor class delta-51 (336 aa).

7 helical membrane passes run 14–34, 48–68, 93–113, 133–153, 188–208, 237–257, and 275–295; these read VYYSLNVTLALSINILLLFIM, YLFNTALFEIIVSLSTYFAQC, CFVTFAVVQCSVVAASFSILL, ATTFIIFSFFPTVMLLFQLLT, AAIIAQSLISLGVYMSPLIAF, GLLIQTLIPFCVYIPPYSYFL, and IFGSFTAFINPLLTFYFVLPY.

This sequence belongs to the nematode receptor-like protein srd family.

The protein localises to the membrane. The protein is Serpentine receptor class delta-51 (srd-51) of Caenorhabditis elegans.